A 359-amino-acid chain; its full sequence is MAEVQKDAPIKSVQVEALVVMKIVKHCSTSFPTVATGSIVGMDNNGAIEVTNSFQFPSVDVSSSDSHSDASSLAAAAPRAKANIVYQNEMIRHLKEVNVDANNVGWYTSATMGNFINMSFIENQYHYQKENEKTVALVHDVSRSSQGALSLRAFKLSPEFMTAYKEAKFTTESLRNSKLTYKDIFVELPVNVHNSHLLTSFLHQIPAPPKSAEIPMPASLDDIRRDPVQIPAHPGFESLDLSIDPFLEKTCDLLLDSIESHYTDLNNHQYYQRQLTREQFKITQWQAKRKAENAARLAAKQSPLPEDEWQRLFKLPQEPSRLEGMLNARQVDQYARQVDAFTANITAKMFAVRGNLLPE.

The 148-residue stretch at 13 to 160 folds into the MPN domain; it reads VQVEALVVMK…LRAFKLSPEF (148 aa).

Belongs to the eIF-3 subunit H family. As to quaternary structure, component of the eukaryotic translation initiation factor 3 (eIF-3) complex.

It localises to the cytoplasm. In terms of biological role, component of the eukaryotic translation initiation factor 3 (eIF-3) complex, which is involved in protein synthesis of a specialized repertoire of mRNAs and, together with other initiation factors, stimulates binding of mRNA and methionyl-tRNAi to the 40S ribosome. The eIF-3 complex specifically targets and initiates translation of a subset of mRNAs involved in cell proliferation. The protein is Eukaryotic translation initiation factor 3 subunit H (eif3h) of Neurospora crassa (strain ATCC 24698 / 74-OR23-1A / CBS 708.71 / DSM 1257 / FGSC 987).